The primary structure comprises 148 residues: MNIKRITTEADLHEALKIRRGVFIEEQHVSEADEFDEFDTLQEQCQHILVYHENQPVGTGRARIVGHTAKLERICILKPYRKYGLGKIIVSGLEEIMKEKGLTSYKLHGQTQAAGFYQKLGYQISSQEFMEDGIPHVLMTKEISRNIT.

One can recognise an N-acetyltransferase domain in the interval 1 to 144; sequence MNIKRITTEA…PHVLMTKEIS (144 aa).

This is an uncharacterized protein from Bacillus subtilis (strain 168).